The following is a 368-amino-acid chain: Phospho-N-acetylmuramoyl-pentapeptide-transferase (368 aa).

The next 10 membrane-spanning stretches (helical) occupy residues 34-54, 79-99, 102-122, 140-160, 176-196, 207-227, 247-267, 271-291, 296-316, and 345-365; these read GAVV…IDHL, TPTM…VLWA, LNPY…VGFY, ARLL…VRLG, LVIK…VGAG, GLAI…AYLA, LAVL…FNAP, IFMG…IAVA, IVLA…IVQV, and QIVI…LSTL.

This sequence belongs to the glycosyltransferase 4 family. MraY subfamily. The cofactor is Mg(2+).

The protein localises to the cell inner membrane. The enzyme catalyses UDP-N-acetyl-alpha-D-muramoyl-L-alanyl-gamma-D-glutamyl-meso-2,6-diaminopimeloyl-D-alanyl-D-alanine + di-trans,octa-cis-undecaprenyl phosphate = di-trans,octa-cis-undecaprenyl diphospho-N-acetyl-alpha-D-muramoyl-L-alanyl-D-glutamyl-meso-2,6-diaminopimeloyl-D-alanyl-D-alanine + UMP. Its pathway is cell wall biogenesis; peptidoglycan biosynthesis. Catalyzes the initial step of the lipid cycle reactions in the biosynthesis of the cell wall peptidoglycan: transfers peptidoglycan precursor phospho-MurNAc-pentapeptide from UDP-MurNAc-pentapeptide onto the lipid carrier undecaprenyl phosphate, yielding undecaprenyl-pyrophosphoryl-MurNAc-pentapeptide, known as lipid I. This is Phospho-N-acetylmuramoyl-pentapeptide-transferase from Bradyrhizobium sp. (strain ORS 278).